The sequence spans 647 residues: MKKEEYLEKVALANLWMRAYYEKDEPLASDEEYDALIRELRVFEEQNKDEISKDSPTQKIAPTIQSEFKKIAHLKRMWSMEDVFDESELRAWAKRAKCEKNFFIEPKFDGASLNLLYENGKLVSGATRGDGEVGEDITLNVFEIENIPKNIAYKERIEIRGEVVILKDDFEKINEKRALLNQSLFANPRNAASGSLRQLDTSITKERNLKFYPWGVGENTLNFTKHSEVMQFIRELGFLKDDFVRLCANLDEVLKAYDELLALREKKPMMMDGMVVRVDDLALCEELGYTVKFPKFMAAFKFPALEKTTRLIGVNLQVGRSGVITPVAVLEPVNLDGVVVKSATLHNFDEIARLDVKINDFVSVIRSGDVIPKITKVFKERREGLEMEISRPKLCPTCQSELLDEGTLIKCQNIDCEDRLVNSIIHFVSKKCLNIDGLGENIVELLYKHKKITTLESIFHLKFNDFEGLEGFKEKKINNLLNAIEQARECELFRFITALGIEHIGEVAAKKLSLSFGKEWYKQSFEAYANLEGFGEQMALSLCEFTRVNRTRIDEFYKLLNLKIEKLEIKSDGVIFGKTFVITGTLSRPRDEFKALIEKLGGKVSGSVSKKTDYVLFGEEAGSKLSKAKELEVKCIDESAFNELVKE.

NAD(+) is bound by residues 30–34 (DEEYD), 79–80 (SM), and glutamate 105. The active-site N6-AMP-lysine intermediate is lysine 107. 3 residues coordinate NAD(+): arginine 128, glutamate 162, and lysine 301. Residues cysteine 395, cysteine 398, cysteine 411, and cysteine 416 each contribute to the Zn(2+) site. A BRCT domain is found at 570–647 (KSDGVIFGKT…ESAFNELVKE (78 aa)).

The protein belongs to the NAD-dependent DNA ligase family. LigA subfamily. It depends on Mg(2+) as a cofactor. Mn(2+) is required as a cofactor.

It carries out the reaction NAD(+) + (deoxyribonucleotide)n-3'-hydroxyl + 5'-phospho-(deoxyribonucleotide)m = (deoxyribonucleotide)n+m + AMP + beta-nicotinamide D-nucleotide.. Functionally, DNA ligase that catalyzes the formation of phosphodiester linkages between 5'-phosphoryl and 3'-hydroxyl groups in double-stranded DNA using NAD as a coenzyme and as the energy source for the reaction. It is essential for DNA replication and repair of damaged DNA. This is DNA ligase from Campylobacter jejuni subsp. jejuni serotype O:2 (strain ATCC 700819 / NCTC 11168).